A 385-amino-acid chain; its full sequence is Chaperone protein DnaJ (385 aa).

The 66-residue stretch at 3 to 68 (DYYEILGVTR…QKRAAYDRFG (66 aa)) folds into the J domain. A CR-type zinc finger spans residues 135–213 (GAEVEITVPA…CHGHGQVRRE (79 aa)). Zn(2+) contacts are provided by C148, C151, C165, C168, C187, C190, C201, and C204. CXXCXGXG motif repeat units follow at residues 148–155 (CEVCEGSG), 165–172 (CGTCGGAG), 187–194 (CPRCGGSG), and 201–208 (CSNCHGHG).

The protein belongs to the DnaJ family. In terms of assembly, homodimer. Zn(2+) serves as cofactor.

Its subcellular location is the cytoplasm. Its function is as follows. Participates actively in the response to hyperosmotic and heat shock by preventing the aggregation of stress-denatured proteins and by disaggregating proteins, also in an autonomous, DnaK-independent fashion. Unfolded proteins bind initially to DnaJ; upon interaction with the DnaJ-bound protein, DnaK hydrolyzes its bound ATP, resulting in the formation of a stable complex. GrpE releases ADP from DnaK; ATP binding to DnaK triggers the release of the substrate protein, thus completing the reaction cycle. Several rounds of ATP-dependent interactions between DnaJ, DnaK and GrpE are required for fully efficient folding. Also involved, together with DnaK and GrpE, in the DNA replication of plasmids through activation of initiation proteins. This is Chaperone protein DnaJ from Caulobacter vibrioides (strain ATCC 19089 / CIP 103742 / CB 15) (Caulobacter crescentus).